The chain runs to 574 residues: Acetolactate synthase large subunit (574 aa).

E51 is a binding site for thiamine diphosphate. FAD-binding positions include R153, 261–282 (HGTY…IGVR), and 304–323 (DIDP…IVGN). A thiamine pyrophosphate binding region spans residues 397 to 477 (QHQMFAALYY…ILILNLNNKS (81 aa)). Mg(2+) is bound by residues D448 and N475.

It belongs to the TPP enzyme family. As to quaternary structure, dimer of large and small chains. Requires Mg(2+) as cofactor. The cofactor is thiamine diphosphate.

The enzyme catalyses 2 pyruvate + H(+) = (2S)-2-acetolactate + CO2. It functions in the pathway amino-acid biosynthesis; L-isoleucine biosynthesis; L-isoleucine from 2-oxobutanoate: step 1/4. The protein operates within amino-acid biosynthesis; L-valine biosynthesis; L-valine from pyruvate: step 1/4. This is Acetolactate synthase large subunit (ilvI) from Buchnera aphidicola subsp. Schlechtendalia chinensis.